Reading from the N-terminus, the 469-residue chain is Cysteine--tRNA ligase (469 aa).

Position 29 (Cys29) interacts with Zn(2+). The 'HIGH' region motif lies at 31–41 (PTVYNYIHIGN). Zn(2+) is bound by residues Cys210, His235, and Glu239. The 'KMSKS' region motif lies at 267 to 271 (KMSKS). An ATP-binding site is contributed by Lys270.

This sequence belongs to the class-I aminoacyl-tRNA synthetase family. As to quaternary structure, monomer. Zn(2+) is required as a cofactor.

It localises to the cytoplasm. It catalyses the reaction tRNA(Cys) + L-cysteine + ATP = L-cysteinyl-tRNA(Cys) + AMP + diphosphate. This is Cysteine--tRNA ligase from Thermosipho melanesiensis (strain DSM 12029 / CIP 104789 / BI429).